We begin with the raw amino-acid sequence, 534 residues long: CTP synthase (534 aa).

The segment at 1–267 (MTKYIFVTGG…GDLIIERLAL (267 aa)) is amidoligase domain. CTP is bound at residue serine 13. A UTP-binding site is contributed by serine 13. ATP is bound at residue 14–19 (SVGKGI). Tyrosine 54 serves as a coordination point for L-glutamine. Aspartate 71 lines the ATP pocket. Residues aspartate 71 and glutamate 141 each coordinate Mg(2+). CTP is bound by residues 148–150 (DIE), 188–193 (KTKPTQ), and lysine 224. UTP is bound by residues 188–193 (KTKPTQ) and lysine 224. Residues 292 to 534 (TVAIVGKYVE…VQAALEQIAE (243 aa)) form the Glutamine amidotransferase type-1 domain. Residue glycine 354 coordinates L-glutamine. The active-site Nucleophile; for glutamine hydrolysis is cysteine 381. Residues 382–385 (LGMQ), glutamate 405, and arginine 462 each bind L-glutamine. Catalysis depends on residues histidine 507 and glutamate 509.

This sequence belongs to the CTP synthase family. As to quaternary structure, homotetramer.

It catalyses the reaction UTP + L-glutamine + ATP + H2O = CTP + L-glutamate + ADP + phosphate + 2 H(+). The catalysed reaction is L-glutamine + H2O = L-glutamate + NH4(+). The enzyme catalyses UTP + NH4(+) + ATP = CTP + ADP + phosphate + 2 H(+). It participates in pyrimidine metabolism; CTP biosynthesis via de novo pathway; CTP from UDP: step 2/2. Allosterically activated by GTP, when glutamine is the substrate; GTP has no effect on the reaction when ammonia is the substrate. The allosteric effector GTP functions by stabilizing the protein conformation that binds the tetrahedral intermediate(s) formed during glutamine hydrolysis. Inhibited by the product CTP, via allosteric rather than competitive inhibition. In terms of biological role, catalyzes the ATP-dependent amination of UTP to CTP with either L-glutamine or ammonia as the source of nitrogen. Regulates intracellular CTP levels through interactions with the four ribonucleotide triphosphates. This is CTP synthase from Herpetosiphon aurantiacus (strain ATCC 23779 / DSM 785 / 114-95).